The sequence spans 338 residues: Solute carrier family 35 member G3 (338 aa).

The segment at 1–24 is disordered; that stretch reads MAGSHPYFNQPDSTHPSPPSAPPS. 9 helical membrane-spanning segments follow: residues 37-57, 67-87, 105-125, 160-180, 190-210, 221-241, 250-270, 281-301, and 305-325; these read TSGL…VGPL, LPSL…ALLL, FFCA…VQVV, CGLL…LWTL, ALGY…LLVY, TVAF…LFVL, LLSW…FTCV, LVCA…YYML, and VAPS…IITA. One can recognise an EamA 1 domain in the interval 49-174; that stretch reads LPAGFVGPLS…CILGLIIIVG (126 aa). The region spanning 272 to 325 is the EamA 2 domain; that stretch reads YAVTKAHPALVCAVLHSEVVVALILQYYMLHETVAPSDIMGAGVALGSIAIITA.

It belongs to the SLC35G solute transporter family.

It localises to the membrane. This is Solute carrier family 35 member G3 (SLC35G3) from Pan paniscus (Pygmy chimpanzee).